The following is a 1081-amino-acid chain: Cellulose synthase A catalytic subunit 1 [UDP-forming] (1081 aa).

Methionine 1 carries the N-acetylmethionine modification. Over methionine 1–arginine 270 the chain is Cytoplasmic. 8 residues coordinate Zn(2+): cysteine 39, cysteine 42, cysteine 58, cysteine 61, cysteine 66, cysteine 69, cysteine 81, and cysteine 84. Residues cysteine 39–lysine 85 form an RING-type; degenerate zinc finger. Residues glycine 118–aspartate 195 are disordered. A compositionally biased stretch (basic and acidic residues) spans histidine 127–serine 139. Over residues proline 158–glycine 168 the composition is skewed to polar residues. The helical transmembrane segment at leucine 271 to tyrosine 291 threads the bilayer. The Extracellular segment spans residues arginine 292–asparagine 299. A helical membrane pass occupies residues alanine 300 to leucine 320. Residues aspartate 321–threonine 856 are Cytoplasmic-facing. UDP-alpha-D-glucose-binding residues include serine 359, lysine 365, glutamate 366, and aspartate 395. Aspartate 395 is an active-site residue. Positions valine 449–isoleucine 476 form a coiled coil. Lysine 536 contacts UDP-alpha-D-glucose. Positions 537 and 561 each coordinate Mn(2+). The active site involves aspartate 780. A helical transmembrane segment spans residues isoleucine 857–leucine 877. At isoleucine 878–asparagine 889 the chain is on the extracellular side. A helical transmembrane segment spans residues tyrosine 890–leucine 910. At arginine 911–glutamine 925 the chain is on the cytoplasmic side. A helical transmembrane segment spans residues phenylalanine 926–valine 946. The Extracellular segment spans residues leucine 947–threonine 976. Asparagine 953 carries N-linked (GlcNAc...) asparagine glycosylation. A helical transmembrane segment spans residues alanine 977–valine 997. Over serine 998–tryptophan 1008 the chain is Cytoplasmic. A helical membrane pass occupies residues glycine 1009–leucine 1029. Residues lysine 1030 to arginine 1038 are Extracellular-facing. Residues threonine 1039–valine 1059 traverse the membrane as a helical segment. The Cytoplasmic portion of the chain corresponds to arginine 1060 to phenylalanine 1081.

It belongs to the glycosyltransferase 2 family. Plant cellulose synthase subfamily. Interacts with CESA3 and CESA6. Assembly with CESA3 and CESA6 is required for functional complex in primary cell wall cellulose synthesis. Interacts with STL1 and STL2, but not with GOT1. Binds to CSI1. Interacts with PAT24/TIP1. Requires Zn(2+) as cofactor. The cofactor is Mn(2+). S-acylated. Expressed in germinating seeds, seedlings, roots, stems, shoots leaves and flowers, but not in mature flowers.

It is found in the cell membrane. The enzyme catalyses [(1-&gt;4)-beta-D-glucosyl](n) + UDP-alpha-D-glucose = [(1-&gt;4)-beta-D-glucosyl](n+1) + UDP + H(+). It participates in glycan metabolism; plant cellulose biosynthesis. Catalytic subunit of cellulose synthase terminal complexes ('rosettes'), required for beta-1,4-glucan microfibril crystallization, a major mechanism of the cell wall formation. Involved in the primary cell wall formation. Required during embryogenesis for cell elongation, orientation of cell expansion and complex cell wall formations, such as interdigitated pattern of epidermal pavement cells, stomatal guard cells and trichomes. Plays a role in lateral roots formation, but seems not necessary for the development of tip-growing cells such as root hairs. The presence of each protein CESA1 and CESA6 is critical for cell expansion after germination. In Arabidopsis thaliana (Mouse-ear cress), this protein is Cellulose synthase A catalytic subunit 1 [UDP-forming].